The following is a 428-amino-acid chain: 3-phosphoshikimate 1-carboxyvinyltransferase (428 aa).

3 residues coordinate 3-phosphoshikimate: K21, S22, and R26. A phosphoenolpyruvate-binding site is contributed by K21. The phosphoenolpyruvate site is built by G92 and R120. Positions 165, 167, 313, and 340 each coordinate 3-phosphoshikimate. Q167 provides a ligand contact to phosphoenolpyruvate. D313 (proton acceptor) is an active-site residue. Phosphoenolpyruvate is bound by residues R344 and R386.

This sequence belongs to the EPSP synthase family. Monomer.

The protein localises to the cytoplasm. It catalyses the reaction 3-phosphoshikimate + phosphoenolpyruvate = 5-O-(1-carboxyvinyl)-3-phosphoshikimate + phosphate. The protein operates within metabolic intermediate biosynthesis; chorismate biosynthesis; chorismate from D-erythrose 4-phosphate and phosphoenolpyruvate: step 6/7. Its function is as follows. Catalyzes the transfer of the enolpyruvyl moiety of phosphoenolpyruvate (PEP) to the 5-hydroxyl of shikimate-3-phosphate (S3P) to produce enolpyruvyl shikimate-3-phosphate and inorganic phosphate. The chain is 3-phosphoshikimate 1-carboxyvinyltransferase from Carboxydothermus hydrogenoformans (strain ATCC BAA-161 / DSM 6008 / Z-2901).